A 259-amino-acid polypeptide reads, in one-letter code: Global transcriptional regulator CodY (259 aa).

The interval 1–155 (MNLLAKTRKL…GATVVGMEIL (155 aa)) is GAF domain. Residues 203–222 (ASKIADRVGITRSVIVNALR) constitute a DNA-binding region (H-T-H motif).

The protein belongs to the CodY family.

Its subcellular location is the cytoplasm. DNA-binding global transcriptional regulator which is involved in the adaptive response to starvation and acts by directly or indirectly controlling the expression of numerous genes in response to nutrient availability. During rapid exponential growth, CodY is highly active and represses genes whose products allow adaptation to nutrient depletion. The protein is Global transcriptional regulator CodY of Exiguobacterium sibiricum (strain DSM 17290 / CCUG 55495 / CIP 109462 / JCM 13490 / 255-15).